The chain runs to 200 residues: uncharacterized protein (200 aa).

Residues Met-1–Asp-21 form a disordered region. A compositionally biased stretch (basic and acidic residues) spans Arg-7 to Asp-21.

This is an uncharacterized protein from Mycobacterium tuberculosis (strain CDC 1551 / Oshkosh).